The following is a 443-amino-acid chain: MREIVHIQGGQCGNQIGAKFWEVVSDEHGIDPTGTYHGDSDLQLERINVYFNEATGGRYVPRAILMDLEPGTMDSVRSGPYGQIFRPDNFVFGQTGAGNNWAKGHYTEGAELIDSVLDVVRKEAESCDCLQGFQVCHSLGGGTGSGMGTLLISKIREEYPDRMMLTFSVVPSPKVSDTVVEPYNATLSVHQLVENADECMVLDNEALYDICFRTLKLTTPTFGDLNHLISAVMSGITCCLRFPGQLNADLRKLAVNLIPFPRLHFFMVGFTPLTSRGSQQYRALTVPELTQQMWDAKNMMCAADPRHGRYLTASALFRGRMSTKEVDEQMLNVQNKNSSYFVEWIPNNVKSSVCDIPPKGLKMSATFIGNSTAIQEMFKRVSEQFTAMFRRKAFLHWYTGEGMDEMEFTEAESNMNDLVSEYQQYQDASAEEEGEFEGEEEEA.

GTP contacts are provided by Gln11, Glu69, Ser138, Gly142, Thr143, Gly144, Asn204, and Asn226. Residue Glu69 participates in Mg(2+) binding. Residues 424 to 443 (QYQDASAEEEGEFEGEEEEA) form a disordered region. Acidic residues predominate over residues 429–443 (SAEEEGEFEGEEEEA).

It belongs to the tubulin family. As to quaternary structure, dimer of alpha and beta chains. A typical microtubule is a hollow water-filled tube with an outer diameter of 25 nm and an inner diameter of 15 nM. Alpha-beta heterodimers associate head-to-tail to form protofilaments running lengthwise along the microtubule wall with the beta-tubulin subunit facing the microtubule plus end conferring a structural polarity. Microtubules usually have 13 protofilaments but different protofilament numbers can be found in some organisms and specialized cells. Requires Mg(2+) as cofactor.

It localises to the cytoplasm. Its subcellular location is the cytoskeleton. Tubulin is the major constituent of microtubules, a cylinder consisting of laterally associated linear protofilaments composed of alpha- and beta-tubulin heterodimers. Microtubules grow by the addition of GTP-tubulin dimers to the microtubule end, where a stabilizing cap forms. Below the cap, tubulin dimers are in GDP-bound state, owing to GTPase activity of alpha-tubulin. This Chlamydomonas reinhardtii (Chlamydomonas smithii) protein is Tubulin beta-1/beta-2 chain (TUBB1).